Reading from the N-terminus, the 344-residue chain is MDENRSKALAAALSQIEKQFGKGSIMRMGDTDVAADIQAVSTGSLGLDIALGIGGLPRGRIVEIYGPESSGKTTLTLSVIAQMQKLGGTAAFIDAEHALDPVYAQKLGVNVSDLLISQPDTGEQALEIADMLVRSGSVDVVVVDSVAALTPKAEIEGEMGDSHMGLQARLMSQALRKLTANIKRTNTLVIFINQIRMKIGVMFGNPETTTGGNALKFYASVRLDIRRTGAIKKGDEVTGSETRVKVVKNKVAPPFKQAEFDILYGEGISREGEIIELGVNLKLIEKAGAWYSYKGEKIGQGKDNAREFLREHPEIANEIDAKIREHSNLANAAMTTAPDEESDE.

G66 to T73 is an ATP binding site.

Belongs to the RecA family.

It is found in the cytoplasm. Its function is as follows. Can catalyze the hydrolysis of ATP in the presence of single-stranded DNA, the ATP-dependent uptake of single-stranded DNA by duplex DNA, and the ATP-dependent hybridization of homologous single-stranded DNAs. It interacts with LexA causing its activation and leading to its autocatalytic cleavage. This is Protein RecA from Methylobacillus flagellatus (strain ATCC 51484 / DSM 6875 / VKM B-1610 / KT).